The chain runs to 505 residues: Phase 1 flagellin (505 aa).

This sequence belongs to the bacterial flagellin family.

It is found in the secreted. It localises to the bacterial flagellum. Its function is as follows. Flagellin is the subunit protein which polymerizes to form the filaments of bacterial flagella. This is Phase 1 flagellin (fliC) from Salmonella naestved.